A 245-amino-acid chain; its full sequence is MSNDMIFGIHAVKAVLATDPVRLIEVFVLKDRQDDRLMPLLTELKDLGITIQHAGRKALDDKAKGASHQGIIARVKPAKQLNEHDLDTILEGSENPLLLILDGVTDPHNLGACLRNADAAGAVAVIIPKDRAAQLTATASKVACGAAEVMPLVRVTNLARTMRALQDKGVWIVGTAGEATHDIYHSKLTGPLAIVMGAEGEGMRRLTRETCDDLIKIPMAGSVSSLNVSVATGICLFEAVRQRQI.

3 residues coordinate S-adenosyl-L-methionine: glycine 197, isoleucine 217, and leucine 226.

It belongs to the class IV-like SAM-binding methyltransferase superfamily. RNA methyltransferase TrmH family. RlmB subfamily.

Its subcellular location is the cytoplasm. The enzyme catalyses guanosine(2251) in 23S rRNA + S-adenosyl-L-methionine = 2'-O-methylguanosine(2251) in 23S rRNA + S-adenosyl-L-homocysteine + H(+). In terms of biological role, specifically methylates the ribose of guanosine 2251 in 23S rRNA. The protein is 23S rRNA (guanosine-2'-O-)-methyltransferase RlmB of Photobacterium profundum (strain SS9).